The primary structure comprises 150 residues: Cytochrome c-type biogenesis protein CcmE (150 aa).

Topologically, residues 1 to 9 (MRNLKKTRR) are cytoplasmic. A helical; Signal-anchor for type II membrane protein membrane pass occupies residues 10 to 30 (IQILLVAGGALVLSTALIGYG). Topologically, residues 31–150 (MRDGINFFRA…VYRDPAQPEG (120 aa)) are periplasmic. Positions 123 and 127 each coordinate heme.

This sequence belongs to the CcmE/CycJ family.

It localises to the cell inner membrane. Its function is as follows. Heme chaperone required for the biogenesis of c-type cytochromes. Transiently binds heme delivered by CcmC and transfers the heme to apo-cytochromes in a process facilitated by CcmF and CcmH. This chain is Cytochrome c-type biogenesis protein CcmE, found in Rhodobacter capsulatus (strain ATCC BAA-309 / NBRC 16581 / SB1003).